The sequence spans 129 residues: Defensin-like protein 182 (129 aa).

The signal sequence occupies residues 1 to 26 (METVTSLVFIVNLLIIFTSVVNQARG). 8 cysteine pairs are disulfide-bonded: Cys29–Cys70, Cys36–Cys55, Cys39–Cys64, Cys43–Cys66, Cys83–Cys129, Cys94–Cys114, Cys99–Cys123, and Cys103–Cys125.

It belongs to the DEFL family.

The protein resides in the secreted. Functionally, confers broad-spectrum resistance to pathogens. In Arabidopsis thaliana (Mouse-ear cress), this protein is Defensin-like protein 182 (PDF3.2).